We begin with the raw amino-acid sequence, 1436 residues long: Gag-Pol polyprotein (1436 aa).

A lipid anchor (N-myristoyl glycine; by host) is attached at G2. Positions 7–31 (VLSGGKLDAWEKIRLRPGGRKKYRL) are interaction with Gp41. Residues 8-43 (LSGGKLDAWEKIRLRPGGRKKYRLKHLVWASRELER) form an interaction with host CALM1 region. Positions 12–19 (KLDAWEKI) are interaction with host AP3D1. The segment at 14–33 (DAWEKIRLRPGGRKKYRLKH) is interaction with membrane phosphatidylinositol 4,5-bisphosphate and RNA. Residues 16-22 (WEKIRLR) carry the Nuclear export signal motif. The short motif at 26–32 (RKKYRLK) is the Nuclear localization signal element. An interaction with membrane phosphatidylinositol 4,5-bisphosphate region spans residues 73–77 (EDLQS). Positions 110 to 129 (KNKQRTQQAPAAADKEKDSK) are disordered. Y134 is modified (phosphotyrosine; by host). Residues 191 to 229 (NTVGGHQAAMQMLKDTINEEAAEWDRLHPVHAGPIPPGQ) are interaction with human PPIA/CYPA and NUP153. A dimerization/Multimerization of capsid protein p24 region spans residues 279–365 (YSPVSILDIK…GGPSHKARVL (87 aa)). CCHC-type zinc fingers lie at residues 393-410 (VKCS…NCRA) and 414-431 (KGCW…DCTG). 2 stretches are compositionally biased toward basic and acidic residues: residues 447-457 (KAREFPPEEAR) and 464-475 (RELRVRRGDHPL). Residues 447 to 482 (KAREFPPEEARANSPTSRELRVRRGDHPLSEAGAER) are disordered. The tract at residues 490-494 (PQITL) is dimerization of protease. The 70-residue stretch at 509-578 (KEALLDTGAD…TPVNIIGRNI (70 aa)) folds into the Peptidase A2 domain. The active-site For protease activity; shared with dimeric partner is the D514. 2 dimerization of protease regions span residues 538–544 (GIGGFIK) and 577–589 (NILT…LNLP). Positions 632–822 (EGKISKIGPE…PPFLWMGYEL (191 aa)) constitute a Reverse transcriptase domain. Residues D698, D773, and D774 each contribute to the Mg(2+) site. The RT 'primer grip' stretch occupies residues 815 to 823 (FLWMGYELH). Residues 986–1002 (WETWWTEHWQATWIPEW) carry the Tryptophan repeat motif motif. In terms of domain architecture, RNase H type-1 spans 1022–1145 (IEGAETYYVD…VDKLVSSGIR (124 aa)). Positions 1031, 1066, 1086, and 1137 each coordinate Mg(2+). Residues 1151–1192 (DGIDKAQVQHEKYHSNWRAMASDFNLPPIVAKEIVASCDKCQ) form an Integrase-type zinc finger. Zn(2+)-binding residues include H1160, H1164, C1188, and C1191. The Integrase catalytic domain occupies 1202-1352 (VDCSPGIWQL…SARERIIDII (151 aa)). The Mg(2+) site is built by D1212, D1264, and E1300. Positions 1371–1418 (FRVYYRDSRDPIWKGPAKLLWKGEGAVVIQDNSEIKVVPRRKAKIIRD) form a DNA-binding region, integrase-type.

In terms of assembly, homotrimer; further assembles as hexamers of trimers. Interacts with gp41 (via C-terminus). Interacts with host CALM1; this interaction induces a conformational change in the Matrix protein, triggering exposure of the myristate group. Interacts with host AP3D1; this interaction allows the polyprotein trafficking to multivesicular bodies during virus assembly. Part of the pre-integration complex (PIC) which is composed of viral genome, matrix protein, Vpr and integrase. As to quaternary structure, homodimer; the homodimer further multimerizes as homohexamers or homopentamers. Interacts with human PPIA/CYPA; This interaction stabilizes the capsid. Interacts with human NUP153. Interacts with host PDZD8; this interaction stabilizes the capsid. Interacts with monkey TRIM5; this interaction destabilizes the capsid. Homodimer, whose active site consists of two apposed aspartic acid residues. In terms of assembly, heterodimer of p66 RT and p51 RT (RT p66/p51). Heterodimerization of RT is essential for DNA polymerase activity. The overall folding of the subdomains is similar in p66 RT and p51 RT but the spatial arrangements of the subdomains are dramatically different. As to quaternary structure, homotetramer; may further associate as a homohexadecamer. Part of the pre-integration complex (PIC) which is composed of viral genome, matrix protein, Vpr and integrase. Interacts with human SMARCB1/INI1 and human PSIP1/LEDGF isoform 1. Interacts with human KPNA3; this interaction might play a role in nuclear import of the pre-integration complex. Interacts with human NUP153; this interaction might play a role in nuclear import of the pre-integration complex. Mg(2+) is required as a cofactor. In terms of processing, specific enzymatic cleavages by the viral protease yield mature proteins. The protease is released by autocatalytic cleavage. The polyprotein is cleaved during and after budding, this process is termed maturation. Proteolytic cleavage of p66 RT removes the RNase H domain to yield the p51 RT subunit. Nucleocapsid protein p7 might be further cleaved after virus entry. Post-translationally, tyrosine phosphorylated presumably in the virion by a host kinase. Phosphorylation is apparently not a major regulator of membrane association. Phosphorylated possibly by host MAPK1; this phosphorylation is necessary for Pin1-mediated virion uncoating. In terms of processing, methylated by host PRMT6, impairing its function by reducing RNA annealing and the initiation of reverse transcription.

It is found in the host cell membrane. The protein localises to the host endosome. Its subcellular location is the host multivesicular body. The protein resides in the virion membrane. It localises to the host nucleus. It is found in the host cytoplasm. The protein localises to the virion. It carries out the reaction Specific for a P1 residue that is hydrophobic, and P1' variable, but often Pro.. The catalysed reaction is Endohydrolysis of RNA in RNA/DNA hybrids. Three different cleavage modes: 1. sequence-specific internal cleavage of RNA. Human immunodeficiency virus type 1 and Moloney murine leukemia virus enzymes prefer to cleave the RNA strand one nucleotide away from the RNA-DNA junction. 2. RNA 5'-end directed cleavage 13-19 nucleotides from the RNA end. 3. DNA 3'-end directed cleavage 15-20 nucleotides away from the primer terminus.. It catalyses the reaction 3'-end directed exonucleolytic cleavage of viral RNA-DNA hybrid.. The enzyme catalyses DNA(n) + a 2'-deoxyribonucleoside 5'-triphosphate = DNA(n+1) + diphosphate. Its activity is regulated as follows. Protease: The viral protease is inhibited by many synthetic protease inhibitors (PIs), such as amprenavir, atazanavir, indinavir, loprinavir, nelfinavir, ritonavir and saquinavir. Use of protease inhibitors in tritherapy regimens permit more ambitious therapeutic strategies. Reverse transcriptase/ribonuclease H: RT can be inhibited either by nucleoside RT inhibitors (NRTIs) or by non nucleoside RT inhibitors (NNRTIs). NRTIs act as chain terminators, whereas NNRTIs inhibit DNA polymerization by binding a small hydrophobic pocket near the RT active site and inducing an allosteric change in this region. Classical NRTIs are abacavir, adefovir (PMEA), didanosine (ddI), lamivudine (3TC), stavudine (d4T), tenofovir (PMPA), zalcitabine (ddC), and zidovudine (AZT). Classical NNRTIs are atevirdine (BHAP U-87201E), delavirdine, efavirenz (DMP-266), emivirine (I-EBU), and nevirapine (BI-RG-587). The tritherapies used as a basic effective treatment of AIDS associate two NRTIs and one NNRTI. Its function is as follows. Mediates, with Gag polyprotein, the essential events in virion assembly, including binding the plasma membrane, making the protein-protein interactions necessary to create spherical particles, recruiting the viral Env proteins, and packaging the genomic RNA via direct interactions with the RNA packaging sequence (Psi). Gag-Pol polyprotein may regulate its own translation, by the binding genomic RNA in the 5'-UTR. At low concentration, the polyprotein would promote translation, whereas at high concentration, the polyprotein would encapsidate genomic RNA and then shut off translation. In terms of biological role, targets the polyprotein to the plasma membrane via a multipartite membrane-binding signal, that includes its myristoylated N-terminus. Matrix protein is part of the pre-integration complex. Implicated in the release from host cell mediated by Vpu. Binds to RNA. Forms the conical core that encapsulates the genomic RNA-nucleocapsid complex in the virion. Most core are conical, with only 7% tubular. The core is constituted by capsid protein hexamer subunits. The core is disassembled soon after virion entry. Host restriction factors such as TRIM5-alpha or TRIMCyp bind retroviral capsids and cause premature capsid disassembly, leading to blocks in reverse transcription. Capsid restriction by TRIM5 is one of the factors which restricts HIV-1 to the human species. Host PIN1 apparently facilitates the virion uncoating. On the other hand, interactions with PDZD8 or CYPA stabilize the capsid. Functionally, encapsulates and protects viral dimeric unspliced genomic RNA (gRNA). Binds these RNAs through its zinc fingers. Acts as a nucleic acid chaperone which is involved in rearangement of nucleic acid secondary structure during gRNA retrotranscription. Also facilitates template switch leading to recombination. As part of the polyprotein, participates in gRNA dimerization, packaging, tRNA incorporation and virion assembly. Its function is as follows. Aspartyl protease that mediates proteolytic cleavages of Gag and Gag-Pol polyproteins during or shortly after the release of the virion from the plasma membrane. Cleavages take place as an ordered, step-wise cascade to yield mature proteins. This process is called maturation. Displays maximal activity during the budding process just prior to particle release from the cell. Also cleaves Nef and Vif, probably concomitantly with viral structural proteins on maturation of virus particles. Hydrolyzes host EIF4GI and PABP1 in order to shut off the capped cellular mRNA translation. The resulting inhibition of cellular protein synthesis serves to ensure maximal viral gene expression and to evade host immune response. Also mediates cleavage of host YTHDF3. Mediates cleavage of host CARD8, thereby activating the CARD8 inflammasome, leading to the clearance of latent HIV-1 in patient CD4(+) T-cells after viral reactivation; in contrast, HIV-1 can evade CARD8-sensing when its protease remains inactive in infected cells prior to viral budding. In terms of biological role, multifunctional enzyme that converts the viral RNA genome into dsDNA in the cytoplasm, shortly after virus entry into the cell. This enzyme displays a DNA polymerase activity that can copy either DNA or RNA templates, and a ribonuclease H (RNase H) activity that cleaves the RNA strand of RNA-DNA heteroduplexes in a partially processive 3' to 5' endonucleasic mode. Conversion of viral genomic RNA into dsDNA requires many steps. A tRNA(3)-Lys binds to the primer-binding site (PBS) situated at the 5'-end of the viral RNA. RT uses the 3' end of the tRNA primer to perform a short round of RNA-dependent minus-strand DNA synthesis. The reading proceeds through the U5 region and ends after the repeated (R) region which is present at both ends of viral RNA. The portion of the RNA-DNA heteroduplex is digested by the RNase H, resulting in a ssDNA product attached to the tRNA primer. This ssDNA/tRNA hybridizes with the identical R region situated at the 3' end of viral RNA. This template exchange, known as minus-strand DNA strong stop transfer, can be either intra- or intermolecular. RT uses the 3' end of this newly synthesized short ssDNA to perform the RNA-dependent minus-strand DNA synthesis of the whole template. RNase H digests the RNA template except for two polypurine tracts (PPTs) situated at the 5'-end and near the center of the genome. It is not clear if both polymerase and RNase H activities are simultaneous. RNase H probably can proceed both in a polymerase-dependent (RNA cut into small fragments by the same RT performing DNA synthesis) and a polymerase-independent mode (cleavage of remaining RNA fragments by free RTs). Secondly, RT performs DNA-directed plus-strand DNA synthesis using the PPTs that have not been removed by RNase H as primers. PPTs and tRNA primers are then removed by RNase H. The 3' and 5' ssDNA PBS regions hybridize to form a circular dsDNA intermediate. Strand displacement synthesis by RT to the PBS and PPT ends produces a blunt ended, linear dsDNA copy of the viral genome that includes long terminal repeats (LTRs) at both ends. Catalyzes viral DNA integration into the host chromosome, by performing a series of DNA cutting and joining reactions. This enzyme activity takes place after virion entry into a cell and reverse transcription of the RNA genome in dsDNA. The first step in the integration process is 3' processing. This step requires a complex comprising the viral genome, matrix protein, Vpr and integrase. This complex is called the pre-integration complex (PIC). The integrase protein removes 2 nucleotides from each 3' end of the viral DNA, leaving recessed CA OH's at the 3' ends. In the second step, the PIC enters cell nucleus. This process is mediated through integrase and Vpr proteins, and allows the virus to infect a non dividing cell. This ability to enter the nucleus is specific of lentiviruses, other retroviruses cannot and rely on cell division to access cell chromosomes. In the third step, termed strand transfer, the integrase protein joins the previously processed 3' ends to the 5' ends of strands of target cellular DNA at the site of integration. The 5'-ends are produced by integrase-catalyzed staggered cuts, 5 bp apart. A Y-shaped, gapped, recombination intermediate results, with the 5'-ends of the viral DNA strands and the 3' ends of target DNA strands remaining unjoined, flanking a gap of 5 bp. The last step is viral DNA integration into host chromosome. This involves host DNA repair synthesis in which the 5 bp gaps between the unjoined strands are filled in and then ligated. Since this process occurs at both cuts flanking the HIV genome, a 5 bp duplication of host DNA is produced at the ends of HIV-1 integration. Alternatively, Integrase may catalyze the excision of viral DNA just after strand transfer, this is termed disintegration. The polypeptide is Gag-Pol polyprotein (gag-pol) (Human immunodeficiency virus type 1 group M subtype H (isolate VI991) (HIV-1)).